The following is a 69-amino-acid chain: Nodulin-3 (69 aa).

Positions 1–24 are cleaved as a signal peptide; that stretch reads MAKILKFVFAIILFFSLFLLSMEA.

The sequence is that of Nodulin-3 (ENOD3) from Pisum sativum (Garden pea).